Reading from the N-terminus, the 1177-residue chain is uncharacterized protein (1177 aa).

The N-terminal stretch at Met1–Ala26 is a signal peptide. The N-palmitoyl cysteine moiety is linked to residue Cys27. Residue Cys27 is the site of S-diacylglycerol cysteine attachment.

The protein belongs to the MG307/MG309/MG338 family.

The protein localises to the cell membrane. This is an uncharacterized protein from Mycoplasma genitalium (strain ATCC 33530 / DSM 19775 / NCTC 10195 / G37) (Mycoplasmoides genitalium).